Reading from the N-terminus, the 377-residue chain is Presenilin-associated rhomboid-like protein, mitochondrial (377 aa).

The N-terminal 52 residues, 1-52 (MAWRGWAQRGWGCGQAWTLPVCGGSYEELTAALAPSRLLRRRFNFFIQQKCG), are a transit peptide targeting the mitochondrion. Residues 53 to 99 (FRKAPRKVEPRRSDTSSEAYKRSALIPPVEETAFYPSPYPIRTLVKP) are Mitochondrial matrix-facing. A phosphoserine mark is found at serine 65 and serine 68. The helical transmembrane segment at 100-119 (LFFTVGFTGCAFGSAAIWQY) threads the bilayer. At 120–165 (ESLKSKVQSYFDGIKADWLDSIRPQKEGDFRKEINKWWNNLSDGQR) the chain is on the mitochondrial intermembrane side. The chain crosses the membrane as a helical span at residues 166–185 (TVTGIIAANVFVFCLWRVPS). Over 186 to 205 (LQRTMIRYFTSNPASKVLCS) the chain is Mitochondrial matrix. A helical membrane pass occupies residues 206 to 228 (PMLLSTFSHFSLFHMAANMYVLW). At 229–242 (SFSSSIVNILGQEQ) the chain is on the mitochondrial intermembrane side. Residues 243 to 260 (FMAVYLSAGVISTFVSYV) form a helical membrane-spanning segment. Residues 261–270 (CKVATGRYGP) lie on the Mitochondrial matrix side of the membrane. A helical transmembrane segment spans residues 271–287 (SLGASGAIMTVLAAVCT). The active-site Nucleophile is serine 275. The Mitochondrial intermembrane segment spans residues 288 to 293 (KIPEGR). A helical membrane pass occupies residues 294 to 316 (LAIIFLPMFTFTAGNALKAIIAM). The Mitochondrial matrix segment spans residues 317–330 (DTAGMILGWKFFDH). The chain crosses the membrane as a helical span at residues 331–352 (AAHLGGALFGIWYITYGHELIW). The active site involves histidine 333. Residues 353–377 (KNREPLVKIWHEMRTNSPKKGGGSK) are Mitochondrial intermembrane-facing.

It belongs to the peptidase S54 family. Interacts with PSEN1 and PSEN2. Binds OPA1. Post-translationally, P-beta is proteolytically processed (beta-cleavage) in a PARL-dependent manner.

The protein localises to the mitochondrion inner membrane. It is found in the nucleus. The catalysed reaction is Cleaves type-1 transmembrane domains using a catalytic dyad composed of serine and histidine that are contributed by different transmembrane domains.. Functionally, required for the control of apoptosis during postnatal growth. Essential for proteolytic processing of an antiapoptotic form of OPA1 which prevents the release of mitochondrial cytochrome c in response to intrinsic apoptotic signals. Required for the maturation of PINK1 into its 52kDa mature form after its cleavage by mitochondrial-processing peptidase (MPP). Promotes cleavage of serine/threonine-protein phosphatase PGAM5 in damaged mitochondria in response to loss of mitochondrial membrane potential. Mediates differential cleavage of PINK1 and PGAM5 depending on the health status of mitochondria, disassociating from PINK1 and associating with PGAM5 in response to mitochondrial membrane potential loss. Required for processing of CLPB into a form with higher protein disaggregase activity by removing an autoinhibitory N-terminal peptide. Promotes processing of DIABLO/SMAC in the mitochondrion which is required for DIABLO apoptotic activity. Also required for cleavage of STARD7 and TTC19. Promotes changes in mitochondria morphology regulated by phosphorylation of P-beta domain. The chain is Presenilin-associated rhomboid-like protein, mitochondrial (PARL) from Bos taurus (Bovine).